Reading from the N-terminus, the 116-residue chain is uncharacterized protein (116 aa).

Residues 20–42 (YLNKYYSVITYFLAFLTKFAILL) form a helical membrane-spanning segment. The segment at 95-116 (IEFQSKSSPVPPASESNKGINE) is disordered.

It is found in the membrane. This is an uncharacterized protein from Saccharomyces cerevisiae (strain ATCC 204508 / S288c) (Baker's yeast).